The following is a 740-amino-acid chain: Elongation factor 2 (740 aa).

One can recognise a tr-type G domain in the interval 23-264 (AQIRNAGTLA…MIIEHVPPPN (242 aa)). Residues 32–39 (AHVDHGKT), 98–102 (DTPGH), and 152–155 (NKID) contribute to the GTP site. H605 is subject to Diphthamide.

Belongs to the TRAFAC class translation factor GTPase superfamily. Classic translation factor GTPase family. EF-G/EF-2 subfamily.

It localises to the cytoplasm. Functionally, catalyzes the GTP-dependent ribosomal translocation step during translation elongation. During this step, the ribosome changes from the pre-translocational (PRE) to the post-translocational (POST) state as the newly formed A-site-bound peptidyl-tRNA and P-site-bound deacylated tRNA move to the P and E sites, respectively. Catalyzes the coordinated movement of the two tRNA molecules, the mRNA and conformational changes in the ribosome. This Pyrobaculum neutrophilum (strain DSM 2338 / JCM 9278 / NBRC 100436 / V24Sta) (Thermoproteus neutrophilus) protein is Elongation factor 2.